The primary structure comprises 451 residues: UPF0210 protein APL_1491 (451 aa).

Belongs to the UPF0210 family. In terms of assembly, homodimer.

In Actinobacillus pleuropneumoniae serotype 5b (strain L20), this protein is UPF0210 protein APL_1491.